The chain runs to 144 residues: D-aminoacyl-tRNA deacylase (144 aa).

The Gly-cisPro motif, important for rejection of L-amino acids motif lies at 136–137; the sequence is GP.

Belongs to the DTD family. Homodimer.

Its subcellular location is the cytoplasm. It carries out the reaction glycyl-tRNA(Ala) + H2O = tRNA(Ala) + glycine + H(+). The catalysed reaction is a D-aminoacyl-tRNA + H2O = a tRNA + a D-alpha-amino acid + H(+). An aminoacyl-tRNA editing enzyme that deacylates mischarged D-aminoacyl-tRNAs. Also deacylates mischarged glycyl-tRNA(Ala), protecting cells against glycine mischarging by AlaRS. Acts via tRNA-based rather than protein-based catalysis; rejects L-amino acids rather than detecting D-amino acids in the active site. By recycling D-aminoacyl-tRNA to D-amino acids and free tRNA molecules, this enzyme counteracts the toxicity associated with the formation of D-aminoacyl-tRNA entities in vivo and helps enforce protein L-homochirality. The protein is D-aminoacyl-tRNA deacylase of Haemophilus influenzae (strain PittGG).